The sequence spans 309 residues: uncharacterized protein (309 aa).

This is an uncharacterized protein from Aedes vexans (Inland floodwater mosquito).